Here is a 189-residue protein sequence, read N- to C-terminus: MTVGILALQGDFREHEEMLRRIGAPTLQVRLPKHLDRVERLIIPGGESTTIGKLLAMYGLIEPLRARVREGMPIWGTCAGAILMAQRIADGRADQPSLRLMAVTARRNAFGSQLESFEIDLPVEALGGESLRMVFIRAPVLEDLGDDVTPLARLEDGRVVAARQANMLATCFHPELTSDERMHRYFLEM.

Residue 46–48 coordinates L-glutamine; that stretch reads GES. The Nucleophile role is filled by cysteine 78. L-glutamine is bound by residues arginine 107 and 136–137; that span reads IR. Active-site charge relay system residues include histidine 173 and glutamate 175.

The protein belongs to the glutaminase PdxT/SNO family. In the presence of PdxS, forms a dodecamer of heterodimers. Only shows activity in the heterodimer.

It carries out the reaction aldehydo-D-ribose 5-phosphate + D-glyceraldehyde 3-phosphate + L-glutamine = pyridoxal 5'-phosphate + L-glutamate + phosphate + 3 H2O + H(+). It catalyses the reaction L-glutamine + H2O = L-glutamate + NH4(+). It functions in the pathway cofactor biosynthesis; pyridoxal 5'-phosphate biosynthesis. Its function is as follows. Catalyzes the hydrolysis of glutamine to glutamate and ammonia as part of the biosynthesis of pyridoxal 5'-phosphate. The resulting ammonia molecule is channeled to the active site of PdxS. The protein is Pyridoxal 5'-phosphate synthase subunit PdxT of Roseiflexus castenholzii (strain DSM 13941 / HLO8).